The following is a 365-amino-acid chain: Phosphate acyltransferase (365 aa).

This sequence belongs to the PlsX family. As to quaternary structure, homodimer. Probably interacts with PlsY.

Its subcellular location is the cytoplasm. It carries out the reaction a fatty acyl-[ACP] + phosphate = an acyl phosphate + holo-[ACP]. It functions in the pathway lipid metabolism; phospholipid metabolism. Catalyzes the reversible formation of acyl-phosphate (acyl-PO(4)) from acyl-[acyl-carrier-protein] (acyl-ACP). This enzyme utilizes acyl-ACP as fatty acyl donor, but not acyl-CoA. In Picosynechococcus sp. (strain ATCC 27264 / PCC 7002 / PR-6) (Agmenellum quadruplicatum), this protein is Phosphate acyltransferase.